The sequence spans 30 residues: Putative alpha-amylase inhibitor (30 aa).

This sequence belongs to the leguminous lectin family.

Its function is as follows. Lectin and alpha-amylase inhibitor. Acts as a defensive protein against insects. The protein is Putative alpha-amylase inhibitor of Phaseolus vulgaris (Kidney bean).